Reading from the N-terminus, the 194-residue chain is Peptide deformylase (194 aa).

Residues cysteine 105 and histidine 147 each coordinate Fe cation. The active site involves glutamate 148. Residue histidine 151 participates in Fe cation binding.

Belongs to the polypeptide deformylase family. Fe(2+) serves as cofactor.

It catalyses the reaction N-terminal N-formyl-L-methionyl-[peptide] + H2O = N-terminal L-methionyl-[peptide] + formate. In terms of biological role, removes the formyl group from the N-terminal Met of newly synthesized proteins. Requires at least a dipeptide for an efficient rate of reaction. N-terminal L-methionine is a prerequisite for activity but the enzyme has broad specificity at other positions. The polypeptide is Peptide deformylase (Flavobacterium psychrophilum (strain ATCC 49511 / DSM 21280 / CIP 103535 / JIP02/86)).